Reading from the N-terminus, the 365-residue chain is Putative outer membrane porin protein NmpC (365 aa).

Positions 1-23 are cleaved as a signal peptide; it reads MKKLTVAISAVAASVLMAMSAQA.

It belongs to the Gram-negative porin family. Homotrimer.

It localises to the cell outer membrane. In Escherichia coli (strain K12), this protein is Putative outer membrane porin protein NmpC (nmpC).